The chain runs to 327 residues: GTPase Obg (327 aa).

Residues His-2 to Ile-160 form the Obg domain. The OBG-type G domain occupies Ala-161 to Lys-326. Residues Gly-167–Ser-174, Phe-192–Ile-196, Asp-213–Gly-216, Ser-280–Asp-283, and Ser-307–Tyr-309 each bind GTP. The Mg(2+) site is built by Ser-174 and Thr-194.

This sequence belongs to the TRAFAC class OBG-HflX-like GTPase superfamily. OBG GTPase family. As to quaternary structure, monomer. It depends on Mg(2+) as a cofactor.

Its subcellular location is the cytoplasm. An essential GTPase which binds GTP, GDP and possibly (p)ppGpp with moderate affinity, with high nucleotide exchange rates and a fairly low GTP hydrolysis rate. Plays a role in control of the cell cycle, stress response, ribosome biogenesis and in those bacteria that undergo differentiation, in morphogenesis control. This chain is GTPase Obg, found in Borrelia duttonii (strain Ly).